Reading from the N-terminus, the 133-residue chain is Small ribosomal subunit protein uS8 (133 aa).

Belongs to the universal ribosomal protein uS8 family. Part of the 30S ribosomal subunit. Contacts proteins S5 and S12.

Functionally, one of the primary rRNA binding proteins, it binds directly to 16S rRNA central domain where it helps coordinate assembly of the platform of the 30S subunit. The chain is Small ribosomal subunit protein uS8 from Prochlorococcus marinus subsp. pastoris (strain CCMP1986 / NIES-2087 / MED4).